The primary structure comprises 289 residues: MAGAGRGAAVSRVQAGPGSPRRARGRQQVQPLGKQRPAPWPGLRSKEKKKVNCKPKNQDEQEIPFRLREIMRSRQEMKNPISNKKRKKAAQVTFRKTLEKEAKGEEPDIAVPKFKQRKGESDGAYIHRMQQEAQHVLFLSKNQAIRQPEVQAAPKEKSEQKKAKKAFQKRRLDKVRRKKEEKAADRLEQELLRDTVKFGEVVLQPPELTARPQRSVSKDQPGRRSQMLRMLLSPGGVSQPLTASLARQRIVEEERERAVQAYRALKQRQQQLHGERPHLTSRKKPEPQL.

Disordered regions lie at residues 1-64 (MAGA…QEIP), 149-184 (EVQA…EKAA), and 204-225 (QPPE…GRRS). Over residues 7–20 (GAAVSRVQAGPGSP) the composition is skewed to low complexity. Residue Ser19 is modified to Phosphoserine. Residues 155-197 (KEKSEQKKAKKAFQKRRLDKVRRKKEEKAADRLEQELLRDTVK) are a coiled coil. The span at 162–177 (KAKKAFQKRRLDKVRR) shows a compositional bias: basic residues. Ser233 carries the post-translational modification Phosphoserine. The stretch at 247 to 273 (RQRIVEEERERAVQAYRALKQRQQQLH) forms a coiled coil. The segment at 265–289 (LKQRQQQLHGERPHLTSRKKPEPQL) is disordered. Residues 273 to 289 (HGERPHLTSRKKPEPQL) show a composition bias toward basic and acidic residues.

It is found in the chromosome. The chain is Coiled-coil domain-containing protein 137 (CCDC137) from Homo sapiens (Human).